The primary structure comprises 868 residues: Leucine--tRNA ligase (868 aa).

The 'HIGH' region motif lies at 42–52 (PYPSGKLHMGH). Positions 627–631 (KMAKS) match the 'KMSKS' region motif. ATP is bound at residue Lys-630.

Belongs to the class-I aminoacyl-tRNA synthetase family.

The protein localises to the cytoplasm. The enzyme catalyses tRNA(Leu) + L-leucine + ATP = L-leucyl-tRNA(Leu) + AMP + diphosphate. The chain is Leucine--tRNA ligase from Pseudomonas fluorescens (strain Pf0-1).